The sequence spans 107 residues: Large ribosomal subunit protein eL33 (107 aa).

It belongs to the eukaryotic ribosomal protein eL33 family. Component of the large ribosomal subunit. Mature ribosomes consist of a small (40S) and a large (60S) subunit. The 40S subunit contains about 32 different proteins and 1 molecule of RNA (18S). The 60S subunit contains 45 different proteins and 3 molecules of RNA (25S, 5.8S and 5S).

The protein resides in the cytoplasm. In terms of biological role, component of the ribosome, a large ribonucleoprotein complex responsible for the synthesis of proteins in the cell. The small ribosomal subunit (SSU) binds messenger RNAs (mRNAs) and translates the encoded message by selecting cognate aminoacyl-transfer RNA (tRNA) molecules. The large subunit (LSU) contains the ribosomal catalytic site termed the peptidyl transferase center (PTC), which catalyzes the formation of peptide bonds, thereby polymerizing the amino acids delivered by tRNAs into a polypeptide chain. The nascent polypeptides leave the ribosome through a tunnel in the LSU and interact with protein factors that function in enzymatic processing, targeting, and the membrane insertion of nascent chains at the exit of the ribosomal tunnel. This chain is Large ribosomal subunit protein eL33, found in Candida albicans (strain SC5314 / ATCC MYA-2876) (Yeast).